We begin with the raw amino-acid sequence, 415 residues long: Histidine--tRNA ligase (415 aa).

This sequence belongs to the class-II aminoacyl-tRNA synthetase family. As to quaternary structure, homodimer.

It is found in the cytoplasm. It carries out the reaction tRNA(His) + L-histidine + ATP = L-histidyl-tRNA(His) + AMP + diphosphate + H(+). The sequence is that of Histidine--tRNA ligase from Clostridium botulinum (strain ATCC 19397 / Type A).